Consider the following 65-residue polypeptide: Alpha-conotoxin BnIA (65 aa).

Residues 1–21 form the signal peptide; sequence MGMRMMFTMFLLVVLATTVVS. The propeptide occupies 22-48; sequence FASDRASDGRNAAAKDKASDLVALTVK. Disulfide bonds link Cys-50–Cys-56 and Cys-51–Cys-64. A ser-Xaa-Pro motif, crucial for potent interaction with nAChR region spans residues 52 to 54; sequence SHP. Residue Cys-64 is modified to Cysteine amide.

It belongs to the conotoxin A superfamily. In terms of tissue distribution, expressed by the venom duct.

It localises to the secreted. Functionally, alpha-conotoxins act on postsynaptic membranes, they bind to the nicotinic acetylcholine receptors (nAChR) and thus inhibit them. This toxin inhibits acetylcholine-evoked currents reversibly in oocytes expressing the human alpha-7/CHRNA7 nAChR, and blocks nerve-evoked skeletal muscle contractions in isolated mouse neuromuscular preparations, but with a very low affinity. The protein is Alpha-conotoxin BnIA of Conus bandanus (Banded marble cone).